The following is a 417-amino-acid chain: 3-isopropylmalate dehydratase large subunit 2 (417 aa).

[4Fe-4S] cluster is bound by residues C298, C358, and C361.

The protein belongs to the aconitase/IPM isomerase family. LeuC type 2 subfamily. Heterodimer of LeuC and LeuD. [4Fe-4S] cluster serves as cofactor.

It carries out the reaction (2R,3S)-3-isopropylmalate = (2S)-2-isopropylmalate. It participates in amino-acid biosynthesis; L-leucine biosynthesis; L-leucine from 3-methyl-2-oxobutanoate: step 2/4. Its function is as follows. Catalyzes the isomerization between 2-isopropylmalate and 3-isopropylmalate, via the formation of 2-isopropylmaleate. This Thermotoga maritima (strain ATCC 43589 / DSM 3109 / JCM 10099 / NBRC 100826 / MSB8) protein is 3-isopropylmalate dehydratase large subunit 2.